A 504-amino-acid chain; its full sequence is Maturase K (504 aa).

It belongs to the intron maturase 2 family. MatK subfamily.

The protein localises to the plastid. It is found in the chloroplast. In terms of biological role, usually encoded in the trnK tRNA gene intron. Probably assists in splicing its own and other chloroplast group II introns. This is Maturase K from Cardamine amara (Large bitter-cress).